The following is a 677-amino-acid chain: UvrABC system protein B (677 aa).

One can recognise a Helicase ATP-binding domain in the interval 24-412 (EGVLEGVPAQ…EGIVVEQVIR (389 aa)). ATP is bound at residue 37–44 (GVTGSGKT). The Beta-hairpin motif lies at 90–113 (YYDYYQPEAYLPSSDTYIEKDLAI). A Helicase C-terminal domain is found at 429 to 591 (QIDDLMEEIQ…ITPQQIKKAR (163 aa)). The 36-residue stretch at 635–670 (EKSMERTRKLMQEAAKKLEFIEAAQYRDELLKMEDL) folds into the UVR domain.

The protein belongs to the UvrB family. As to quaternary structure, forms a heterotetramer with UvrA during the search for lesions. Interacts with UvrC in an incision complex.

It localises to the cytoplasm. Functionally, the UvrABC repair system catalyzes the recognition and processing of DNA lesions. A damage recognition complex composed of 2 UvrA and 2 UvrB subunits scans DNA for abnormalities. Upon binding of the UvrA(2)B(2) complex to a putative damaged site, the DNA wraps around one UvrB monomer. DNA wrap is dependent on ATP binding by UvrB and probably causes local melting of the DNA helix, facilitating insertion of UvrB beta-hairpin between the DNA strands. Then UvrB probes one DNA strand for the presence of a lesion. If a lesion is found the UvrA subunits dissociate and the UvrB-DNA preincision complex is formed. This complex is subsequently bound by UvrC and the second UvrB is released. If no lesion is found, the DNA wraps around the other UvrB subunit that will check the other stand for damage. This Bacteroides fragilis (strain ATCC 25285 / DSM 2151 / CCUG 4856 / JCM 11019 / LMG 10263 / NCTC 9343 / Onslow / VPI 2553 / EN-2) protein is UvrABC system protein B.